The sequence spans 234 residues: Ubiquinone biosynthesis O-methyltransferase (234 aa).

4 residues coordinate S-adenosyl-L-methionine: R40, G59, D80, and M123.

This sequence belongs to the methyltransferase superfamily. UbiG/COQ3 family.

The enzyme catalyses a 3-demethylubiquinol + S-adenosyl-L-methionine = a ubiquinol + S-adenosyl-L-homocysteine + H(+). It catalyses the reaction a 3-(all-trans-polyprenyl)benzene-1,2-diol + S-adenosyl-L-methionine = a 2-methoxy-6-(all-trans-polyprenyl)phenol + S-adenosyl-L-homocysteine + H(+). The protein operates within cofactor biosynthesis; ubiquinone biosynthesis. Functionally, O-methyltransferase that catalyzes the 2 O-methylation steps in the ubiquinone biosynthetic pathway. The protein is Ubiquinone biosynthesis O-methyltransferase of Coxiella burnetii (strain CbuG_Q212) (Coxiella burnetii (strain Q212)).